Reading from the N-terminus, the 98-residue chain is snRNA-activating protein complex subunit 5 (98 aa).

Residues 73–82 (QTTLELSTKS) show a composition bias toward polar residues. The segment at 73–98 (QTTLELSTKSHVTEEEEEEEEEESDS) is disordered. Phosphothreonine is present on T85. Residues 86 to 98 (EEEEEEEEEESDS) are compositionally biased toward acidic residues.

Part of the SNAPc complex composed of 5 subunits: SNAPC1, SNAPC2, SNAPC3, SNAPC4 and SNAPC5. SNAPC5 interacts with SNAPC4.

It is found in the nucleus. Its function is as follows. Part of the SNAPc complex required for the transcription of both RNA polymerase II and III small-nuclear RNA genes. Binds to the proximal sequence element (PSE), a non-TATA-box basal promoter element common to these 2 types of genes. Recruits TBP and BRF2 to the U6 snRNA TATA box. This chain is snRNA-activating protein complex subunit 5 (SNAPC5), found in Homo sapiens (Human).